Reading from the N-terminus, the 213-residue chain is Orotate phosphoribosyltransferase (213 aa).

Residue K26 participates in 5-phospho-alpha-D-ribose 1-diphosphate binding. Position 34 to 35 (F34 to F35) interacts with orotate. 5-phospho-alpha-D-ribose 1-diphosphate-binding positions include Y72–K73, R99, K100, K103, H105, and D124–A132. Residues T128 and R156 each contribute to the orotate site.

This sequence belongs to the purine/pyrimidine phosphoribosyltransferase family. PyrE subfamily. Homodimer. Requires Mg(2+) as cofactor.

The enzyme catalyses orotidine 5'-phosphate + diphosphate = orotate + 5-phospho-alpha-D-ribose 1-diphosphate. It functions in the pathway pyrimidine metabolism; UMP biosynthesis via de novo pathway; UMP from orotate: step 1/2. Functionally, catalyzes the transfer of a ribosyl phosphate group from 5-phosphoribose 1-diphosphate to orotate, leading to the formation of orotidine monophosphate (OMP). The sequence is that of Orotate phosphoribosyltransferase from Pseudomonas savastanoi pv. phaseolicola (strain 1448A / Race 6) (Pseudomonas syringae pv. phaseolicola (strain 1448A / Race 6)).